The chain runs to 186 residues: MEILDLTQTLINFPYPGDPELRIIEKKIDGFIVSEIIMGSHLCTHIDYPKHVGLENRIPFKDGIIKGKGYCISLDDFERNKLPACDILLIYTGFSKYWGRDEYFEKIPEIPFLDDIIKSNIKCVGIDACTIGGFEEHKRLLSNNILIIENLNENLKNLVGKSFYFLGLPLKIFDIDASPIRCIAIL.

This is an uncharacterized protein from Methanocaldococcus jannaschii (strain ATCC 43067 / DSM 2661 / JAL-1 / JCM 10045 / NBRC 100440) (Methanococcus jannaschii).